Reading from the N-terminus, the 407-residue chain is Phosphopentomutase (407 aa).

Mn(2+) contacts are provided by aspartate 11, aspartate 305, histidine 310, aspartate 346, histidine 347, and histidine 358.

It belongs to the phosphopentomutase family. Mn(2+) is required as a cofactor.

The protein localises to the cytoplasm. It catalyses the reaction 2-deoxy-alpha-D-ribose 1-phosphate = 2-deoxy-D-ribose 5-phosphate. The enzyme catalyses alpha-D-ribose 1-phosphate = D-ribose 5-phosphate. It functions in the pathway carbohydrate degradation; 2-deoxy-D-ribose 1-phosphate degradation; D-glyceraldehyde 3-phosphate and acetaldehyde from 2-deoxy-alpha-D-ribose 1-phosphate: step 1/2. Its function is as follows. Isomerase that catalyzes the conversion of deoxy-ribose 1-phosphate (dRib-1-P) and ribose 1-phosphate (Rib-1-P) to deoxy-ribose 5-phosphate (dRib-5-P) and ribose 5-phosphate (Rib-5-P), respectively. This chain is Phosphopentomutase, found in Legionella pneumophila subsp. pneumophila (strain Philadelphia 1 / ATCC 33152 / DSM 7513).